The primary structure comprises 881 residues: Alanine--tRNA ligase (881 aa).

The segment covering 422 to 440 (FEDEMQKQKERARSARSTE) has biased composition (basic and acidic residues). The tract at residues 422-445 (FEDEMQKQKERARSARSTEKSMGV) is disordered. Zn(2+)-binding residues include His-567, His-571, Cys-669, and His-673.

It belongs to the class-II aminoacyl-tRNA synthetase family. The cofactor is Zn(2+).

It localises to the cytoplasm. The catalysed reaction is tRNA(Ala) + L-alanine + ATP = L-alanyl-tRNA(Ala) + AMP + diphosphate. Catalyzes the attachment of alanine to tRNA(Ala) in a two-step reaction: alanine is first activated by ATP to form Ala-AMP and then transferred to the acceptor end of tRNA(Ala). Also edits incorrectly charged Ser-tRNA(Ala) and Gly-tRNA(Ala) via its editing domain. The protein is Alanine--tRNA ligase of Pediococcus pentosaceus (strain ATCC 25745 / CCUG 21536 / LMG 10740 / 183-1w).